We begin with the raw amino-acid sequence, 944 residues long: Isoleucine--tRNA ligase (944 aa).

The short motif at 58 to 68 (PYANGSIHIGH) is the 'HIGH' region element. L-isoleucyl-5'-AMP is bound at residue Glu-563. The 'KMSKS' region signature appears at 604 to 608 (KMSKS). ATP is bound at residue Lys-607. The Zn(2+) site is built by Cys-907, Cys-910, Cys-927, and Cys-930.

This sequence belongs to the class-I aminoacyl-tRNA synthetase family. IleS type 1 subfamily. As to quaternary structure, monomer. The cofactor is Zn(2+).

Its subcellular location is the cytoplasm. The enzyme catalyses tRNA(Ile) + L-isoleucine + ATP = L-isoleucyl-tRNA(Ile) + AMP + diphosphate. In terms of biological role, catalyzes the attachment of isoleucine to tRNA(Ile). As IleRS can inadvertently accommodate and process structurally similar amino acids such as valine, to avoid such errors it has two additional distinct tRNA(Ile)-dependent editing activities. One activity is designated as 'pretransfer' editing and involves the hydrolysis of activated Val-AMP. The other activity is designated 'posttransfer' editing and involves deacylation of mischarged Val-tRNA(Ile). This chain is Isoleucine--tRNA ligase, found in Salmonella choleraesuis (strain SC-B67).